We begin with the raw amino-acid sequence, 276 residues long: Diaminopimelate epimerase (276 aa).

3 residues coordinate substrate: Asn-13, Gln-46, and Asn-66. Cys-75 (proton donor) is an active-site residue. Substrate contacts are provided by residues 76–77, Asn-159, Asn-192, and 210–211; these read GN and ER. Cys-219 (proton acceptor) is an active-site residue. Substrate is bound at residue 220–221; sequence GT.

This sequence belongs to the diaminopimelate epimerase family. In terms of assembly, homodimer.

It localises to the cytoplasm. It catalyses the reaction (2S,6S)-2,6-diaminopimelate = meso-2,6-diaminopimelate. It participates in amino-acid biosynthesis; L-lysine biosynthesis via DAP pathway; DL-2,6-diaminopimelate from LL-2,6-diaminopimelate: step 1/1. Its function is as follows. Catalyzes the stereoinversion of LL-2,6-diaminopimelate (L,L-DAP) to meso-diaminopimelate (meso-DAP), a precursor of L-lysine and an essential component of the bacterial peptidoglycan. This Pseudomonas syringae pv. syringae (strain B728a) protein is Diaminopimelate epimerase.